We begin with the raw amino-acid sequence, 425 residues long: Glutamate-1-semialdehyde 2,1-aminomutase (425 aa).

Lysine 265 bears the N6-(pyridoxal phosphate)lysine mark.

It belongs to the class-III pyridoxal-phosphate-dependent aminotransferase family. HemL subfamily. Homodimer. The cofactor is pyridoxal 5'-phosphate.

It localises to the cytoplasm. The enzyme catalyses (S)-4-amino-5-oxopentanoate = 5-aminolevulinate. Its pathway is porphyrin-containing compound metabolism; protoporphyrin-IX biosynthesis; 5-aminolevulinate from L-glutamyl-tRNA(Glu): step 2/2. The chain is Glutamate-1-semialdehyde 2,1-aminomutase from Opitutus terrae (strain DSM 11246 / JCM 15787 / PB90-1).